The following is a 1476-amino-acid chain: ABC transporter G family member 17 (1476 aa).

Disordered regions lie at residues 13 to 45 (SENNNNNNNNNNNNNNNNNNNLNNNNDNDYDYD) and 68 to 91 (FREIDGGKNNNNHDIELGERKPEN). Residues 14–67 (ENNNNNNNNNNNNNNNNNNNLNNNNDNDYDYDSINNIEEKFENVSKELEGQSIK) are a coiled coil. The segment covering 15 to 39 (NNNNNNNNNNNNNNNNNNNLNNNND) has biased composition (low complexity). The 252-residue stretch at 151-402 (LNPFNYFKKD…FLDLGFDCEP (252 aa)) folds into the ABC transporter 1 domain. An ABC transmembrane type-2 1 domain is found at 507 to 751 (WGDKFTLTSR…SLSVKGENYL (245 aa)). The next 5 membrane-spanning stretches (helical) occupy residues 517 to 537 (FLTILVLSFIFGGIYFQQPLT), 547 to 567 (AIFTSIIFNCILTQGELHGAL), 592 to 612 (ILIDIPFILVQVFLHSFIVYF), 623 to 643 (FFIFCFTLVGVSLSSASLFRG), and 764 to 784 (LNVVVIFLFWLFYIGLNLFAV). Positions 838–1082 (FSWKSISYTV…LTSYFERHGV (245 aa)) constitute an ABC transporter 2 domain. 874–881 (GSSGAGKT) provides a ligand contact to ATP. The next 6 membrane-spanning stretches (helical) occupy residues 1182-1202 (FYTMGSFAQSAVSGLVIGFTF), 1219-1239 (SWEAMILGVLLIYLVLPMFFI), 1260-1280 (LSMIAVEIPYVVLSSTLFFIA), 1298-1318 (WLMHTMFSVYIVSFAQALGAA), 1322-1342 (IAISIAALPIVLFYLFLLCGV), and 1450-1470 (FGIIVAYWGSSILAVLFFVYL). Residues 1182–1405 (FYTMGSFAQS…TDCQTYSAPF (224 aa)) form the ABC transmembrane type-2 2 domain.

It belongs to the ABC transporter superfamily. ABCG family. PDR (TC 3.A.1.205) subfamily.

Its subcellular location is the membrane. This Dictyostelium discoideum (Social amoeba) protein is ABC transporter G family member 17 (abcG17-1).